The sequence spans 465 residues: Glutamate--tRNA ligase (465 aa).

A 'HIGH' region motif is present at residues 8–18 (PSPTGDLHIGG). Positions 235–239 (RLSKR) match the 'KMSKS' region motif. Lys-238 contacts ATP.

This sequence belongs to the class-I aminoacyl-tRNA synthetase family. Glutamate--tRNA ligase type 1 subfamily. Monomer.

It localises to the cytoplasm. It carries out the reaction tRNA(Glu) + L-glutamate + ATP = L-glutamyl-tRNA(Glu) + AMP + diphosphate. Functionally, catalyzes the attachment of glutamate to tRNA(Glu) in a two-step reaction: glutamate is first activated by ATP to form Glu-AMP and then transferred to the acceptor end of tRNA(Glu). This Dichelobacter nodosus (strain VCS1703A) protein is Glutamate--tRNA ligase.